The following is a 135-amino-acid chain: Galectin-1 (135 aa).

Ala-2 carries the N-acetylalanine modification. The Galectin domain occupies 4-135 (GLVASNLNLK…DFKIKCVAFE (132 aa)). N6-acetyllysine is present on residues Lys-13 and Lys-29. Position 30 is a phosphoserine (Ser-30). A beta-D-galactoside contacts are provided by residues 45-49 (HFNPR), His-53, Asn-62, and 69-72 (WGAE). An N6-acetyllysine; alternate modification is found at Lys-108. Residue Lys-108 is modified to N6-succinyllysine; alternate. Position 128 is an N6-acetyllysine (Lys-128).

As to quaternary structure, homodimer. Binds LGALS3BP. Interacts with CD2, CD3, CD4, CD6, CD7, CD43, ALCAM and CD45. Interacts with laminin (via poly-N-acetyllactosamine). Interacts with SUSD2. Interacts with cargo receptor TMED10; the interaction mediates the translocation from the cytoplasm into the ERGIC (endoplasmic reticulum-Golgi intermediate compartment) and thereby secretion.

It localises to the secreted. Its subcellular location is the extracellular space. It is found in the extracellular matrix. The protein resides in the cytoplasm. Lectin that binds beta-galactoside and a wide array of complex carbohydrates. Plays a role in regulating apoptosis, cell proliferation and cell differentiation. Inhibits CD45 protein phosphatase activity and therefore the dephosphorylation of Lyn kinase. Strong inducer of T-cell apoptosis. The sequence is that of Galectin-1 (LGALS1) from Ovis aries (Sheep).